The sequence spans 645 residues: MERQSRVMSEKDEYQFQHQGAVELLVFNFLLILTILTIWLFKNHRFRFLHETGGAMVYGLIMGLILRYATAPTDIESGTVYDCVKLTFSPSTLLVNITDQVYEYKYKREISQHNINPHQGNAILEKMTFDPEIFFNVLLPPIIFHAGYSLKKRHFFQNLGSILTYAFLGTAISCIVIGLIMYGFVKAMIHAGQLKNGDFHFTDCLFFGSLMSATDPVTVLAIFHELHVDPDLYTLLFGESVLNDAVAIVLTYSISIYSPKENPNAFDAAAFFQSVGNFLGIFAGSFAMGSAYAIITALLTKFTKLCEFPMLETGLFFLLSWSAFLSAEAAGLTGIVAVLFCGVTQAHYTYNNLSSDSKIRTKQLFEFMNFLAENVIFCYMGLALFTFQNHIFNALFILGAFLAIFVARACNIYPLSFLLNLGRKQKIPWNFQHMMMFSGLRGAIAFALAIRNTESQPKQMMFTTTLLLVFFTVWVFGGGTTPMLTWLQIRVGVDLDENLKEDPSSQHQEANNLDKNMTKAESARLFRMWYSFDHKYLKPILTHSGPPLTTTLPEWCGPISRLLTSPQAYGEQLKEDDVECIVNQDELAINYQEQASSPCSPPARLGLDQKASPQTPGKENIYEGDLGLGGYELKLEQTLGQSQLN.

Residues 1-20 are Lumenal-facing; it reads MERQSRVMSEKDEYQFQHQG. A helical membrane pass occupies residues 21–41; that stretch reads AVELLVFNFLLILTILTIWLF. Residues 42-45 are Cytoplasmic-facing; that stretch reads KNHR. Residues 46 to 66 form a helical membrane-spanning segment; sequence FRFLHETGGAMVYGLIMGLIL. At 67–126 the chain is on the lumenal side; it reads RYATAPTDIESGTVYDCVKLTFSPSTLLVNITDQVYEYKYKREISQHNINPHQGNAILEK. The N-linked (GlcNAc...) asparagine glycan is linked to N96. Residues 127–147 form a helical membrane-spanning segment; that stretch reads MTFDPEIFFNVLLPPIIFHAG. Residues 148-164 are Cytoplasmic-facing; it reads YSLKKRHFFQNLGSILT. The chain crosses the membrane as a helical span at residues 165–185; that stretch reads YAFLGTAISCIVIGLIMYGFV. Residues 186–203 lie on the Lumenal side of the membrane; that stretch reads KAMIHAGQLKNGDFHFTD. The helical transmembrane segment at 204 to 224 threads the bilayer; sequence CLFFGSLMSATDPVTVLAIFH. Residues 225 to 235 lie on the Cytoplasmic side of the membrane; that stretch reads ELHVDPDLYTL. A helical transmembrane segment spans residues 236 to 256; it reads LFGESVLNDAVAIVLTYSISI. Residues 257–277 are Lumenal-facing; sequence YSPKENPNAFDAAAFFQSVGN. The helical transmembrane segment at 278–298 threads the bilayer; it reads FLGIFAGSFAMGSAYAIITAL. Residues 299–301 lie on the Cytoplasmic side of the membrane; it reads LTK. A run of 2 helical transmembrane segments spans residues 302-322 and 323-343; these read FTKLCEFPMLETGLFFLLSWS and AFLSAEAAGLTGIVAVLFCGV. Topologically, residues 344-364 are cytoplasmic; the sequence is TQAHYTYNNLSSDSKIRTKQL. Residues 365-385 form a helical membrane-spanning segment; sequence FEFMNFLAENVIFCYMGLALF. Residue T386 is a topological domain, lumenal. The chain crosses the membrane as a helical span at residues 387–407; it reads FQNHIFNALFILGAFLAIFVA. The Cytoplasmic segment spans residues 408-429; that stretch reads RACNIYPLSFLLNLGRKQKIPW. The helical transmembrane segment at 430–450 threads the bilayer; that stretch reads NFQHMMMFSGLRGAIAFALAI. Topologically, residues 451–465 are lumenal; that stretch reads RNTESQPKQMMFTTT. Residues 466–486 form a helical membrane-spanning segment; sequence LLLVFFTVWVFGGGTTPMLTW. At 487-645 the chain is on the cytoplasmic side; the sequence is LQIRVGVDLD…EQTLGQSQLN (159 aa). Residues 594-622 are disordered; the sequence is QASSPCSPPARLGLDQKASPQTPGKENIY.

This sequence belongs to the monovalent cation:proton antiporter 1 (CPA1) transporter (TC 2.A.36) family. Homodimer; phosphatidylinositol-4,5-bisphosphate (PIP2) and phosphatidylinositol 3,4,5-trisphosphate (PIP3) could be involved in the dimer stabilization. Interacts (via the C-terminus) with RACK1. Interacts with CHP1. As to expression, ubiquitously expressed in all tissues tested. Expressed at highest levels in heart and skeletal muscle, followed by placenta, kidney, and liver. Expressed in the brain, in the medulla and spinal cord.

It localises to the late endosome membrane. Its subcellular location is the early endosome membrane. It is found in the recycling endosome membrane. The protein resides in the cell membrane. The protein localises to the cytoplasmic vesicle. It localises to the phagosome membrane. The enzyme catalyses Na(+)(in) + H(+)(out) = Na(+)(out) + H(+)(in). The catalysed reaction is K(+)(in) + H(+)(out) = K(+)(out) + H(+)(in). Endosomal Na(+), K(+)/H(+) antiporter. Mediates the electroneutral exchange of endosomal luminal H(+) for a cytosolic Na(+) or K(+). By facilitating proton efflux, SLC9A9 counteracts the acidity generated by vacuolar (V)-ATPase, thereby limiting luminal acidification. Regulates organellar pH and consequently, e.g., endosome maturation and endocytic trafficking of plasma membrane receptors and neurotransporters. Promotes the recycling of transferrin receptors back to the cell surface to facilitate additional iron uptake in the brain. Regulates synaptic transmission by regulating the luminal pH of axonal endosomes. Regulates phagosome lumenal pH, thus affecting phagosome maturation, and consequently, microbicidal activity in macrophages. Can also be active at the cell surface of specialized cells, e.g., in the inner ear hair bundles uses the high K(+) of the endolymph to regulate intracelular pH. This chain is Sodium/hydrogen exchanger 9, found in Homo sapiens (Human).